Here is a 413-residue protein sequence, read N- to C-terminus: tRNA (guanine-N(7)-)-methyltransferase non-catalytic subunit WDR4 (413 aa).

Position 2 is an N-acetylalanine (alanine 2). WD repeat units follow at residues 61–100 (TGSD…CLSV), 102–141 (MVVR…GCGR), 145–185 (GHLS…IESF), 188–228 (GHTE…QLQC), and 289–329 (TFPH…WQAA). Residues 380–413 (RLQQQLKKKRQRSPFPGSPEQTKKACPGQSALSC) are disordered. Serine 392 and serine 412 each carry phosphoserine.

Belongs to the WD repeat TRM82 family. In terms of assembly, non-catalytic component of the METTL1-WDR4 complex, composed of METTL1 and WDR4. Interacts with FEN1; the interaction is direct.

The protein localises to the nucleus. It is found in the chromosome. It participates in tRNA modification; N(7)-methylguanine-tRNA biosynthesis. Non-catalytic component of the METTL1-WDR4 methyltransferase complex required for the formation of N(7)-methylguanine in a subset of RNA species, such as tRNAs, mRNAs and microRNAs (miRNAs). In the METTL1-WDR4 methyltransferase complex, WDR4 acts as a scaffold for tRNA-binding. Required for the formation of N(7)-methylguanine at position 46 (m7G46) in a large subset of tRNAs that contain the 5'-RAGGU-3' motif within the variable loop. M7G46 interacts with C13-G22 in the D-loop to stabilize tRNA tertiary structure and protect tRNAs from decay. Also required for the formation of N(7)-methylguanine at internal sites in a subset of mRNAs. Also required for methylation of a specific subset of miRNAs, such as let-7. Acts as a regulator of embryonic stem cell self-renewal and differentiation. Independently of METTL1, also plays a role in genome stability: localizes at the DNA replication site and regulates endonucleolytic activities of FEN1. This is tRNA (guanine-N(7)-)-methyltransferase non-catalytic subunit WDR4 from Mus musculus (Mouse).